Reading from the N-terminus, the 483-residue chain is UDP-N-acetylmuramoyl-L-alanyl-D-glutamate--2,6-diaminopimelate ligase (483 aa).

Serine 29 lines the UDP-N-acetyl-alpha-D-muramoyl-L-alanyl-D-glutamate pocket. 112–118 is an ATP binding site; that stretch reads GTNGKTT. UDP-N-acetyl-alpha-D-muramoyl-L-alanyl-D-glutamate-binding positions include 154–155, serine 181, and arginine 189; that span reads TT. Lysine 221 bears the N6-carboxylysine mark. Meso-2,6-diaminopimelate-binding positions include arginine 380, 404 to 407, glycine 454, and glutamate 458; that span reads DNPR. A Meso-diaminopimelate recognition motif motif is present at residues 404–407; it reads DNPR.

It belongs to the MurCDEF family. MurE subfamily. Requires Mg(2+) as cofactor. Carboxylation is probably crucial for Mg(2+) binding and, consequently, for the gamma-phosphate positioning of ATP.

Its subcellular location is the cytoplasm. The enzyme catalyses UDP-N-acetyl-alpha-D-muramoyl-L-alanyl-D-glutamate + meso-2,6-diaminopimelate + ATP = UDP-N-acetyl-alpha-D-muramoyl-L-alanyl-gamma-D-glutamyl-meso-2,6-diaminopimelate + ADP + phosphate + H(+). It participates in cell wall biogenesis; peptidoglycan biosynthesis. Functionally, catalyzes the addition of meso-diaminopimelic acid to the nucleotide precursor UDP-N-acetylmuramoyl-L-alanyl-D-glutamate (UMAG) in the biosynthesis of bacterial cell-wall peptidoglycan. This chain is UDP-N-acetylmuramoyl-L-alanyl-D-glutamate--2,6-diaminopimelate ligase, found in Clostridium botulinum (strain ATCC 19397 / Type A).